Consider the following 953-residue polypeptide: Isoleucine--tRNA ligase (953 aa).

A 'HIGH' region motif is present at residues 61 to 71 (PYANGALHIGH). Glu-564 provides a ligand contact to L-isoleucyl-5'-AMP. The 'KMSKS' region signature appears at 605 to 609 (KMSKS). Lys-608 serves as a coordination point for ATP. Zn(2+) contacts are provided by Cys-922, Cys-925, Cys-942, and Cys-945.

It belongs to the class-I aminoacyl-tRNA synthetase family. IleS type 1 subfamily. As to quaternary structure, monomer. Zn(2+) serves as cofactor.

The protein localises to the cytoplasm. The catalysed reaction is tRNA(Ile) + L-isoleucine + ATP = L-isoleucyl-tRNA(Ile) + AMP + diphosphate. Functionally, catalyzes the attachment of isoleucine to tRNA(Ile). As IleRS can inadvertently accommodate and process structurally similar amino acids such as valine, to avoid such errors it has two additional distinct tRNA(Ile)-dependent editing activities. One activity is designated as 'pretransfer' editing and involves the hydrolysis of activated Val-AMP. The other activity is designated 'posttransfer' editing and involves deacylation of mischarged Val-tRNA(Ile). This chain is Isoleucine--tRNA ligase, found in Thermosynechococcus vestitus (strain NIES-2133 / IAM M-273 / BP-1).